Here is an 81-residue protein sequence, read N- to C-terminus: Defensin-like protein 130 (81 aa).

Residues 1-21 form the signal peptide; that stretch reads MTKNTSLTIFMVVLVIGMLYT. 4 disulfides stabilise this stretch: cysteine 32–cysteine 81, cysteine 41–cysteine 63, cysteine 46–cysteine 75, and cysteine 50–cysteine 77.

The protein belongs to the DEFL family.

The protein localises to the secreted. The sequence is that of Defensin-like protein 130 (LCR28) from Arabidopsis thaliana (Mouse-ear cress).